We begin with the raw amino-acid sequence, 268 residues long: Tryptophan synthase alpha chain (268 aa).

Residues Glu-49 and Asp-60 each act as proton acceptor in the active site.

This sequence belongs to the TrpA family. In terms of assembly, tetramer of two alpha and two beta chains.

It catalyses the reaction (1S,2R)-1-C-(indol-3-yl)glycerol 3-phosphate + L-serine = D-glyceraldehyde 3-phosphate + L-tryptophan + H2O. It functions in the pathway amino-acid biosynthesis; L-tryptophan biosynthesis; L-tryptophan from chorismate: step 5/5. The alpha subunit is responsible for the aldol cleavage of indoleglycerol phosphate to indole and glyceraldehyde 3-phosphate. This is Tryptophan synthase alpha chain from Aliivibrio fischeri (strain ATCC 700601 / ES114) (Vibrio fischeri).